The sequence spans 245 residues: Phosducin (245 aa).

Positions M1–R67 are disordered. In terms of domain architecture, Phosducin spans M1–E241. Residues S58 to R67 are compositionally biased toward basic and acidic residues. At S73 the chain carries Phosphoserine; by PKA. Positions Y111 to E245 are thioredoxin fold.

This sequence belongs to the phosducin family. In terms of assembly, forms a complex with the beta and gamma subunits of the GTP-binding protein, transducin. Interacts with CRX. Light-induced changes in cyclic nucleotide levels modulate the phosphorylation of this protein by cAMP kinase.

It localises to the cytoplasm. The protein localises to the cytosol. Its subcellular location is the nucleus. The protein resides in the cell projection. It is found in the cilium. It localises to the photoreceptor outer segment. The protein localises to the photoreceptor inner segment. In terms of biological role, may participate in the regulation of visual phototransduction or in the integration of photoreceptor metabolism. Inhibits the transcriptional activation activity of the cone-rod homeobox CRX. This chain is Phosducin (PDC), found in Equus caballus (Horse).